The following is a 142-amino-acid chain: MAKKVANILKLQIPAGGANPSPPVGPALGQVGVNIMDFCNAFNAETQSAEKGMPLPVVITVYEDKSFTFVVKTPPAAVLIRKILGIAKGSGEPNREKVGKLTRAQLEDIAKQKEPDLNSNDIDAAVLIIAGTARSMGVEVDL.

This sequence belongs to the universal ribosomal protein uL11 family. As to quaternary structure, part of the ribosomal stalk of the 50S ribosomal subunit. Interacts with L10 and the large rRNA to form the base of the stalk. L10 forms an elongated spine to which L12 dimers bind in a sequential fashion forming a multimeric L10(L12)X complex. One or more lysine residues are methylated.

Forms part of the ribosomal stalk which helps the ribosome interact with GTP-bound translation factors. This Gamma-proteobacterium EBAC31A08 protein is Large ribosomal subunit protein uL11.